The sequence spans 87 residues: Small ribosomal subunit protein eS21B (87 aa).

An N-acetylmethionine modification is found at Met-1.

The protein belongs to the eukaryotic ribosomal protein eS21 family. In terms of assembly, component of the small ribosomal subunit (SSU). Mature yeast ribosomes consist of a small (40S) and a large (60S) subunit. The 40S small subunit contains 1 molecule of ribosomal RNA (18S rRNA) and 33 different proteins (encoded by 57 genes). The large 60S subunit contains 3 rRNA molecules (25S, 5.8S and 5S rRNA) and 46 different proteins (encoded by 81 genes). In terms of processing, N-terminally acetylated by acetyltransferase NatB.

The protein resides in the cytoplasm. Component of the ribosome, a large ribonucleoprotein complex responsible for the synthesis of proteins in the cell. The small ribosomal subunit (SSU) binds messenger RNAs (mRNAs) and translates the encoded message by selecting cognate aminoacyl-transfer RNA (tRNA) molecules. The large subunit (LSU) contains the ribosomal catalytic site termed the peptidyl transferase center (PTC), which catalyzes the formation of peptide bonds, thereby polymerizing the amino acids delivered by tRNAs into a polypeptide chain. The nascent polypeptides leave the ribosome through a tunnel in the LSU and interact with protein factors that function in enzymatic processing, targeting, and the membrane insertion of nascent chains at the exit of the ribosomal tunnel. eS21 is required for the processing of the 20S rRNA-precursor to mature 18S rRNA in a late step of the maturation of 40S ribosomal subunits. Has a physiological role leading to 18S rRNA stability. This Saccharomyces cerevisiae (strain ATCC 204508 / S288c) (Baker's yeast) protein is Small ribosomal subunit protein eS21B.